Consider the following 252-residue polypeptide: Transcriptional regulatory protein HptR (252 aa).

In terms of domain architecture, Response regulatory spans 3–118 (KVVICDDERI…QLEVILGRLV (116 aa)). D55 carries the post-translational modification 4-aspartylphosphate. The 98-residue stretch at 153-250 (NQIVDQIKQS…QMSPSDYCKQ (98 aa)) folds into the HTH araC/xylS-type domain. 2 consecutive DNA-binding regions (H-T-H motif) follow at residues 170 to 191 (SDLI…KDHV) and 217 to 240 (HYEI…KKYL).

Phosphorylated by HptS.

The protein resides in the cytoplasm. Functionally, member of the two-component regulatory system HptS/HptR that regulates genes involved in hexose phosphate transport system in response to changes in extracellular phosphate sources. Activates uhpT expression to facilitate glucose-6-phosphate/G6P utilization by directly binding to its promoter. Antagonizes CcpA-dependent transcription of a subset of CcpA-regulated genes involved in antibiotic susceptibility. The sequence is that of Transcriptional regulatory protein HptR (hptR) from Staphylococcus aureus (strain NCTC 8325 / PS 47).